The following is a 538-amino-acid chain: indole-2-monooxygenase (538 aa).

Residues 22-42 (ALLLAIPFSLLLLPLLLRYLA) form a helical membrane-spanning segment. A heme-binding site is contributed by C481.

This sequence belongs to the cytochrome P450 family. Heme is required as a cofactor.

Its subcellular location is the membrane. The catalysed reaction is indole + reduced [NADPH--hemoprotein reductase] + O2 = indolin-2-one + oxidized [NADPH--hemoprotein reductase] + H2O + H(+). Its pathway is secondary metabolite biosynthesis; 2,4-dihydroxy-1,4-benzoxazin-3-one biosynthesis; 2,4-dihydroxy-1,4-benzoxazin-3-one from indoleglycerol phosphate: step 2/5. Its function is as follows. Catalyzes the conversion of indole to indolin-2-one. The protein is indole-2-monooxygenase (CYP71C4) of Zea mays (Maize).